The following is a 124-amino-acid chain: Colorectal cancer-associated protein 1 (124 aa).

Residues 77–97 (LYGCFCVGLVSGMAISVLLLA) traverse the membrane as a helical segment.

In terms of tissue distribution, expressed in gastrointestinal and immune tissue, as well as prostate, testis and ovary. Expressed in lamina propria and eosinophils but not in epithelial cells. Expression is greater in benign adjacent tissues than in colon tumors.

Its subcellular location is the membrane. This chain is Colorectal cancer-associated protein 1 (COLCA1), found in Homo sapiens (Human).